The following is a 397-amino-acid chain: Acetate kinase (397 aa).

Asn7 serves as a coordination point for Mg(2+). Residue Lys14 participates in ATP binding. Arg90 lines the substrate pocket. Asp147 functions as the Proton donor/acceptor in the catalytic mechanism. Residues His207–Gly211, Asp282–Arg284, and Gly330–Asn334 contribute to the ATP site. Glu384 is a Mg(2+) binding site.

Belongs to the acetokinase family. In terms of assembly, homodimer. The cofactor is Mg(2+). Requires Mn(2+) as cofactor.

Its subcellular location is the cytoplasm. The catalysed reaction is acetate + ATP = acetyl phosphate + ADP. Its pathway is metabolic intermediate biosynthesis; acetyl-CoA biosynthesis; acetyl-CoA from acetate: step 1/2. Functionally, catalyzes the formation of acetyl phosphate from acetate and ATP. Can also catalyze the reverse reaction. The polypeptide is Acetate kinase (Agathobacter rectalis (strain ATCC 33656 / DSM 3377 / JCM 17463 / KCTC 5835 / VPI 0990) (Eubacterium rectale)).